The primary structure comprises 54 residues: Large ribosomal subunit protein bL33B (54 aa).

The protein belongs to the bacterial ribosomal protein bL33 family.

This chain is Large ribosomal subunit protein bL33B, found in Mycolicibacterium vanbaalenii (strain DSM 7251 / JCM 13017 / BCRC 16820 / KCTC 9966 / NRRL B-24157 / PYR-1) (Mycobacterium vanbaalenii).